Consider the following 2090-residue polypeptide: Nuclear pore complex protein Nup214 (2090 aa).

Gly2 bears the N-acetylglycine mark. Ser30 is subject to Phosphoserine. 7 Blade repeats span residues 41–93 (LLAV…PMKF), 94–150 (PIHH…DAGG), 151–193 (MVID…PSTV), 194–239 (AVTS…ESDH), 240–303 (PVRV…ERQH), 304–359 (HYYL…KSDD), and 360–404 (SLPM…FYMI). The interval 41–404 (LLAVSNKYGL…DGVLCPFYMI (364 aa)) is seven-bladed beta propeller. The segment at 236 to 1418 (ESDHPVRVLD…AVFGSLPVTS (1183 aa)) is 44 X 2 AA repeats of F-G. Thr416 carries the post-translational modification Phosphothreonine. Phosphoserine occurs at positions 421, 430, and 433. The segment at 422–460 (LEGERQPKSPGSTPTTPTSSQAPQKLDASAAAAPASLPP) is disordered. The segment covering 429-441 (KSPGSTPTTPTSS) has biased composition (low complexity). A phosphothreonine mark is found at Thr434, Thr437, and Thr439. Residues 450 to 586 (SAAAAPASLP…PPSTSAVKVN (137 aa)) are (Microbial infection) Binds human adenovirus 5 (HAdV-5) protein L3 (hexon). The 11 X 5 AA approximate repeats stretch occupies residues 481 to 2076 (VFSFGSSSLK…GSGTGGFSFG (1596 aa)). Copy 1 of the repeat occupies 484–485 (FG). Composition is skewed to low complexity over residues 489–513 (LKSSATVTGEPPSYSSGSDSSKAAP) and 524–536 (PPSKASLAPTPAA). The tract at residues 489 to 536 (LKSSATVTGEPPSYSSGSDSSKAAPGPGPSTFSFVPPSKASLAPTPAA) is disordered. Copy 2 of the repeat occupies 548-549 (FG). Low complexity-rich tracts occupy residues 597–629 (STPVSSSQSAPPMSPFSSASKPAASGPLSHPTP) and 637–658 (VPLKSSVLPSPSGRSAQGSSSP). Residues 597-700 (STPVSSSQSA…KQGHQWKDSD (104 aa)) form a disordered region. Phosphoserine occurs at positions 651, 657, and 666. At Thr670 the chain carries Phosphothreonine. Residue Ser678 is modified to Phosphoserine. A coiled-coil region spans residues 680-1209 (QAKSLQPAVA…VTSTPSASGQ (530 aa)). The span at 691 to 700 (KQGHQWKDSD) shows a compositional bias: basic and acidic residues. Leucine-zipper stretches follow at residues 740–768 (LRTESDDLHTFLLEIKETTESLHGDISSL) and 861–882 (LANNREIINQQRKRLNHLVDSL). Ser760 is subject to Phosphoserine. Ser940, Ser970, Ser974, and Ser989 each carry phosphoserine. The disordered stretch occupies residues 987–1009 (TSSVSQSLESEDARTSCKDDEAV). Over residues 997-1007 (EDARTSCKDDE) the composition is skewed to basic and acidic residues. Thr1021 carries the phosphothreonine modification. Ser1023, Ser1045, Ser1056, and Ser1081 each carry phosphoserine. Over residues 1128–1149 (LKNNPATPSTAMGSSVPYSTAK) the composition is skewed to polar residues. The disordered stretch occupies residues 1128–1152 (LKNNPATPSTAMGSSVPYSTAKTPH). 3 positions are modified to phosphothreonine: Thr1134, Thr1150, and Thr1156. Composition is skewed to polar residues over residues 1168-1188 (LINSLKPSGPTPASGQLSSGD) and 1199-1213 (AVTSTPSASGQFSKP). The disordered stretch occupies residues 1168-1213 (LINSLKPSGPTPASGQLSSGDKASGTAKIETAVTSTPSASGQFSKP). At Ser1181 the chain carries Phosphoserine. Repeat unit 3 spans residues 1225–1226 (FG). Polar residues-rich tracts occupy residues 1234–1254 (SNFTAAQGATPSTKESSQPDA) and 1273–1285 (PPSGITSASNTTP). Disordered regions lie at residues 1234 to 1316 (SNFT…PPSK) and 1337 to 1408 (LRVG…TSST). Residues 1288–1299 (PAASSSRPVAPS) are compositionally biased toward low complexity. The segment covering 1301–1310 (TALSTTSSKL) has biased composition (polar residues). The residue at position 1312 (Thr1312) is a Phosphothreonine. The span at 1347–1368 (KPTNKASSTSLTSTQPTKTSGV) shows a compositional bias: polar residues. Ser1353 bears the Phosphoserine mark. Positions 1386–1408 (PPVTSSATTTSVAPPAATSTSST) are enriched in low complexity. The tract at residues 1409–2084 (AVFGSLPVTS…FGSNNSSVQG (676 aa)) is 18 X 4 AA approximate repeats. 4 repeat units span residues 1411–1412 (FG), 1427–1428 (FG), 1441–1442 (FG), and 1473–1474 (FG). Residues 1427–2085 (FGGTSLSAGK…GSNNSSVQGF (659 aa)) are 11 X 3 AA approximate repeats. Polar residues predominate over residues 1438 to 1450 (SFSFGSQQTNSTV). The tract at residues 1438 to 1467 (SFSFGSQQTNSTVPPSAPPPTTAATPLPTS) is disordered. 2 stretches are compositionally biased toward low complexity: residues 1479–1489 (SATTPSLPMSA) and 1508–1527 (SEVSASAASLLEEQQSAQLP). Residues 1479 to 1539 (SATTPSLPMS…PPQTSDSVKK (61 aa)) are disordered. Lys1538 is covalently cross-linked (Glycyl lysine isopeptide (Lys-Gly) (interchain with G-Cter in SUMO2)). 18 tandem repeats follow at residues 1635–1636 (FG), 1674–1675 (FG), 1686–1687 (FG), 1713–1714 (FG), 1721–1722 (FG), 1726–1727 (FG), 1732–1733 (FG), 1756–1757 (FG), 1772–1773 (FG), 1786–1787 (FG), 1798–1799 (FG), 1806–1807 (FG), 1812–1813 (FG), 1819–1820 (FG), 1842–1843 (FG), 1851–1852 (FG), 1862–1863 (FG), and 1874–1875 (FG). Residues 1884–1903 (GFFSGLGGKPSQDAANKNPF) form a disordered region. A run of 5 repeats spans residues 1910 to 1911 (FG), 1922 to 1923 (FG), 1930 to 1931 (FG), 1938 to 1939 (FG), and 1959 to 1960 (FG). At Ser1963 the chain carries Phosphoserine. 3 repeat units span residues 1970-1971 (FG), 1976-1977 (FG), and 1982-1983 (FG). Ser1985 is modified (phosphoserine). 11 consecutive repeat copies span residues 1988-1989 (FG), 1994-1995 (FG), 2012-2013 (FG), 2024-2025 (FG), 2026-2027 (FG), 2035-2036 (FG), 2046-2047 (FG), 2056-2057 (FG), 2066-2067 (FG), 2075-2076 (FG), and 2085-2086 (FG).

In terms of assembly, homodimer. Part of the nuclear pore complex (NPC). Interacts with NUP88. Interacts with ZFP36; this interaction increases upon lipopolysaccharide (LPS) stimulation. Interacts with DDX19. Interacts with XPO1. Interacts with XPO5. (Microbial infection) Interacts with human herpes virus 1 (HHV-1) protein UL25; this interaction might be essential to the capsid docking onto the host nuclear pore. As to quaternary structure, (Microbial infection) Interacts (via N-terminus) with human adenovirus 5 (HAdV-5) protein L3 (hexon); this interaction might be essential for the release of the virus genome to the nucleus. Probably glycosylated as it reacts with wheat germ agglutinin (WGA). Expressed in thymus, spleen, bone marrow, kidney, brain and testis, but hardly in all other tissues or in whole embryos during development.

It localises to the nucleus. Its subcellular location is the nuclear pore complex. Part of the nuclear pore complex. Has a critical role in nucleocytoplasmic transport. May serve as a docking site in the receptor-mediated import of substrates across the nuclear pore complex. In terms of biological role, (Microbial infection) Required for capsid disassembly of the human adenovirus 5 (HadV-5) leading to release of the viral genome to the nucleus (in vitro). The protein is Nuclear pore complex protein Nup214 (NUP214) of Homo sapiens (Human).